The chain runs to 101 residues: Small ribosomal subunit protein uS14 (101 aa).

This sequence belongs to the universal ribosomal protein uS14 family. As to quaternary structure, part of the 30S ribosomal subunit. Contacts proteins S3 and S10.

Functionally, binds 16S rRNA, required for the assembly of 30S particles and may also be responsible for determining the conformation of the 16S rRNA at the A site. The sequence is that of Small ribosomal subunit protein uS14 from Chromohalobacter salexigens (strain ATCC BAA-138 / DSM 3043 / CIP 106854 / NCIMB 13768 / 1H11).